We begin with the raw amino-acid sequence, 361 residues long: Histidinol-phosphate aminotransferase (361 aa).

The disordered stretch occupies residues 26 to 45; that stretch reads GMDPEDLTKLSSNENPHGPS. Lys-222 carries the post-translational modification N6-(pyridoxal phosphate)lysine.

It belongs to the class-II pyridoxal-phosphate-dependent aminotransferase family. Histidinol-phosphate aminotransferase subfamily. Pyridoxal 5'-phosphate is required as a cofactor.

It carries out the reaction L-histidinol phosphate + 2-oxoglutarate = 3-(imidazol-4-yl)-2-oxopropyl phosphate + L-glutamate. The protein operates within amino-acid biosynthesis; L-histidine biosynthesis; L-histidine from 5-phospho-alpha-D-ribose 1-diphosphate: step 7/9. The sequence is that of Histidinol-phosphate aminotransferase (hisC) from Haloferax volcanii (strain ATCC 29605 / DSM 3757 / JCM 8879 / NBRC 14742 / NCIMB 2012 / VKM B-1768 / DS2) (Halobacterium volcanii).